A 154-amino-acid chain; its full sequence is SsrA-binding protein (154 aa).

This sequence belongs to the SmpB family.

It localises to the cytoplasm. Functionally, required for rescue of stalled ribosomes mediated by trans-translation. Binds to transfer-messenger RNA (tmRNA), required for stable association of tmRNA with ribosomes. tmRNA and SmpB together mimic tRNA shape, replacing the anticodon stem-loop with SmpB. tmRNA is encoded by the ssrA gene; the 2 termini fold to resemble tRNA(Ala) and it encodes a 'tag peptide', a short internal open reading frame. During trans-translation Ala-aminoacylated tmRNA acts like a tRNA, entering the A-site of stalled ribosomes, displacing the stalled mRNA. The ribosome then switches to translate the ORF on the tmRNA; the nascent peptide is terminated with the 'tag peptide' encoded by the tmRNA and targeted for degradation. The ribosome is freed to recommence translation, which seems to be the essential function of trans-translation. This is SsrA-binding protein from Synechocystis sp. (strain ATCC 27184 / PCC 6803 / Kazusa).